A 639-amino-acid polypeptide reads, in one-letter code: Phosphomethylpyrimidine synthase (639 aa).

Residues 49–71 (DTPTDFGGEQNRPVRVYDTSGPY) are disordered. Substrate-binding positions include Asn231, Met260, Tyr289, His325, 345 to 347 (SRG), 386 to 389 (DGLR), and Glu425. Residue His429 participates in Zn(2+) binding. Tyr452 contributes to the substrate binding site. His493 is a Zn(2+) binding site. Residues Cys573, Cys576, and Cys581 each coordinate [4Fe-4S] cluster.

This sequence belongs to the ThiC family. In terms of assembly, homodimer. Requires [4Fe-4S] cluster as cofactor.

It carries out the reaction 5-amino-1-(5-phospho-beta-D-ribosyl)imidazole + S-adenosyl-L-methionine = 4-amino-2-methyl-5-(phosphooxymethyl)pyrimidine + CO + 5'-deoxyadenosine + formate + L-methionine + 3 H(+). It functions in the pathway cofactor biosynthesis; thiamine diphosphate biosynthesis. Its function is as follows. Catalyzes the synthesis of the hydroxymethylpyrimidine phosphate (HMP-P) moiety of thiamine from aminoimidazole ribotide (AIR) in a radical S-adenosyl-L-methionine (SAM)-dependent reaction. This Teredinibacter turnerae (strain ATCC 39867 / T7901) protein is Phosphomethylpyrimidine synthase.